The primary structure comprises 430 residues: Adenylosuccinate synthetase (430 aa).

GTP-binding positions include 12 to 18 (GDEGKGK) and 40 to 42 (GHT). The Proton acceptor role is filled by aspartate 13. Mg(2+)-binding residues include aspartate 13 and glycine 40. Residues 13 to 16 (DEGK), 38 to 41 (NAGH), threonine 130, arginine 144, glutamine 224, threonine 239, and arginine 303 contribute to the IMP site. Residue histidine 41 is the Proton donor of the active site. 299 to 305 (VNTGRKR) contacts substrate. GTP-binding positions include arginine 305, 331-333 (KLD), and 413-415 (STS).

Belongs to the adenylosuccinate synthetase family. As to quaternary structure, homodimer. The cofactor is Mg(2+).

The protein resides in the cytoplasm. The enzyme catalyses IMP + L-aspartate + GTP = N(6)-(1,2-dicarboxyethyl)-AMP + GDP + phosphate + 2 H(+). It functions in the pathway purine metabolism; AMP biosynthesis via de novo pathway; AMP from IMP: step 1/2. In terms of biological role, plays an important role in the de novo pathway of purine nucleotide biosynthesis. Catalyzes the first committed step in the biosynthesis of AMP from IMP. In Rhodopseudomonas palustris (strain BisB18), this protein is Adenylosuccinate synthetase.